Reading from the N-terminus, the 627-residue chain is Plasmepsin IX (627 aa).

The Cytoplasmic segment spans residues 1 to 13 (MFFINFKKIKKKQ). The chain crosses the membrane as a helical; Signal-anchor for type II membrane protein span at residues 14-34 (FPIYLTQHRIITVFLIFIYFI). The Lumenal segment spans residues 35–627 (NLKDCFHINN…SSLHNKINNL (593 aa)). One can recognise a Peptidase A1 domain in the interval 228–605 (YVGYIQIGTP…NNNSSYVGIA (378 aa)). Catalysis depends on residues D246 and D495.

The protein belongs to the peptidase A1 family. In terms of processing, autocleaved into a p55 mature form.

The protein localises to the membrane. It localises to the cytoplasmic vesicle. It is found in the secretory vesicle. The protein resides in the rhoptry. Inhibited by small molecule 49c. Inhibited by small molecule WM382. Functionally, during the asexual blood stage, initiates the proteolytic maturation of several rhoptry proteins and thus, is required for merozoite invasion of host erythrocytes and probably the subsequent development of the ring-stage. Cleaves rhoptry associated protein 1 RAP1 and apical sushi protein ASP during schizont maturation. Also cleaves rhoptry protein RON3. This is Plasmepsin IX from Plasmodium falciparum (isolate 3D7).